The sequence spans 106 residues: P4 prophage-derived uncharacterized protein t2655 (106 aa).

The polypeptide is P4 prophage-derived uncharacterized protein t2655 (Salmonella typhi).